The following is a 137-amino-acid chain: Outer membrane protein assembly factor BamE (137 aa).

The N-terminal stretch at 1 to 18 (MQVKTLLGATFLALSLAS) is a signal peptide. Cysteine 19 carries the N-palmitoyl cysteine lipid modification. Cysteine 19 is lipidated: S-diacylglycerol cysteine.

It belongs to the BamE family. As to quaternary structure, part of the Bam complex.

It is found in the cell outer membrane. Its function is as follows. Part of the outer membrane protein assembly complex, which is involved in assembly and insertion of beta-barrel proteins into the outer membrane. The polypeptide is Outer membrane protein assembly factor BamE (Haemophilus influenzae (strain ATCC 51907 / DSM 11121 / KW20 / Rd)).